Here is a 134-residue protein sequence, read N- to C-terminus: MENKKTIYFLCTGNSCRSQMAEAWGKQYLGDKWNVYSAGIEAHGVNPNAIKAMNEVNIDITNQTSDIIDANILNRADLVVTLCSHADAVCPSTPPDVHRVHWGFDDPAGKEWSEFQRVRDEIGERIKRFSETGE.

Catalysis depends on nucleophile residues cysteine 11, cysteine 83, and cysteine 90. Cystine bridges form between cysteine 11–cysteine 83 and cysteine 83–cysteine 90.

The protein belongs to the low molecular weight phosphotyrosine protein phosphatase family. Thioredoxin-coupled ArsC subfamily.

It is found in the cytoplasm. It catalyses the reaction arsenate + [thioredoxin]-dithiol + H(+) = arsenite + [thioredoxin]-disulfide + H2O. Its function is as follows. Catalyzes the reduction of arsenate [As(V)] to arsenite [As(III)]. This is Arsenate reductase from Bacillus cereus (strain Q1).